Here is a 315-residue protein sequence, read N- to C-terminus: Prephenate dehydratase (315 aa).

Positions 3 to 189 constitute a Prephenate dehydratase domain; the sequence is RIAYLGPEGT…ARTRFLLIGV (187 aa). The ACT domain occupies 203–280; it reads SVVLRIANVP…ADVRYLGSWP (78 aa).

As to quaternary structure, homodimer.

It carries out the reaction prephenate + H(+) = 3-phenylpyruvate + CO2 + H2O. The protein operates within amino-acid biosynthesis; L-phenylalanine biosynthesis; phenylpyruvate from prephenate: step 1/1. In Mycobacterium marinum (strain ATCC BAA-535 / M), this protein is Prephenate dehydratase (pheA).